A 353-amino-acid chain; its full sequence is Guanine nucleotide-binding protein alpha-1 subunit (353 aa).

The tract at residues 1–26 is disordered; the sequence is MGCGMSTEEKEGKARNEEIENQLKRD. Gly2 carries N-myristoyl glycine lipidation. Cys3 carries the S-palmitoyl cysteine lipid modification. Over residues 7–26 the composition is skewed to basic and acidic residues; sequence TEEKEGKARNEEIENQLKRD. The 322-residue stretch at 32–353 folds into the G-alpha domain; it reads NEIKMLLLGA…QENLRLCGLI (322 aa). Residues 35–48 are G1 motif; the sequence is KMLLLGAGESGKST. Residues Glu43, Ser44, Gly45, Lys46, Ser47, Thr48, Asp150, Leu175, Thr181, Gly203, Asn269, Lys270, Asp272, and Ala325 each contribute to the GTP site. Ser47 lines the Mg(2+) pocket. The interval 173–181 is G2 motif; the sequence is DVLRSRVKT. A Mg(2+)-binding site is contributed by Thr181. The G3 motif stretch occupies residues 196-205; it reads YRMFDVGGQR. A G4 motif region spans residues 265 to 272; that stretch reads ILFLNKID. Positions 323 to 328 are G5 motif; it reads TCATDT.

It belongs to the G-alpha family. G(q) subfamily. In terms of assembly, g proteins are composed of 3 units; alpha, beta and gamma. The alpha chain contains the guanine nucleotide binding site. The cofactor is Mg(2+).

In terms of biological role, guanine nucleotide-binding proteins (G proteins) are involved as modulators or transducers in various transmembrane signaling systems. The polypeptide is Guanine nucleotide-binding protein alpha-1 subunit (gna-1) (Neurospora crassa (strain ATCC 24698 / 74-OR23-1A / CBS 708.71 / DSM 1257 / FGSC 987)).